Reading from the N-terminus, the 252-residue chain is Thiazole synthase (252 aa).

The active-site Schiff-base intermediate with DXP is the lysine 98. Residues glycine 159, 185–186, and 207–208 each bind 1-deoxy-D-xylulose 5-phosphate; these read AG and AT.

The protein belongs to the ThiG family. Homotetramer. Forms heterodimers with either ThiH or ThiS.

It is found in the cytoplasm. The enzyme catalyses [ThiS sulfur-carrier protein]-C-terminal-Gly-aminoethanethioate + 2-iminoacetate + 1-deoxy-D-xylulose 5-phosphate = [ThiS sulfur-carrier protein]-C-terminal Gly-Gly + 2-[(2R,5Z)-2-carboxy-4-methylthiazol-5(2H)-ylidene]ethyl phosphate + 2 H2O + H(+). Its pathway is cofactor biosynthesis; thiamine diphosphate biosynthesis. In terms of biological role, catalyzes the rearrangement of 1-deoxy-D-xylulose 5-phosphate (DXP) to produce the thiazole phosphate moiety of thiamine. Sulfur is provided by the thiocarboxylate moiety of the carrier protein ThiS. In vitro, sulfur can be provided by H(2)S. This is Thiazole synthase from Mycobacterium avium (strain 104).